Reading from the N-terminus, the 193-residue chain is NADH-quinone oxidoreductase subunit B (193 aa).

Cys72, Cys73, Cys137, and Cys167 together coordinate [4Fe-4S] cluster.

It belongs to the complex I 20 kDa subunit family. NDH-1 is composed of 14 different subunits. Subunits NuoB, C, D, E, F, and G constitute the peripheral sector of the complex. Requires [4Fe-4S] cluster as cofactor.

The protein resides in the cell inner membrane. The enzyme catalyses a quinone + NADH + 5 H(+)(in) = a quinol + NAD(+) + 4 H(+)(out). Functionally, NDH-1 shuttles electrons from NADH, via FMN and iron-sulfur (Fe-S) centers, to quinones in the respiratory chain. Couples the redox reaction to proton translocation (for every two electrons transferred, four hydrogen ions are translocated across the cytoplasmic membrane), and thus conserves the redox energy in a proton gradient. In Brucella anthropi (strain ATCC 49188 / DSM 6882 / CCUG 24695 / JCM 21032 / LMG 3331 / NBRC 15819 / NCTC 12168 / Alc 37) (Ochrobactrum anthropi), this protein is NADH-quinone oxidoreductase subunit B.